Consider the following 249-residue polypeptide: MIHSLPSPEPFVILAMPRTGTHYLEALLNDHPNILSNGELLNSYDENWPDKDRLRHSDRELLELAYMRYPPAKKKVTHVGCKINEPQFYERPGFFDELARWQGLKVILLTRNTLESLRSLVQARQTGQWLKFSPDRNEPPSVSLSVNECEAYFKAADDFHARVKDAFDPSKLLMIEYQDLLLKPSACLAAVLAFLGAPAHRFSNRATIQRQETRSLARSLRNFVELRRHFAGGPYAKFFELDDASAPQG.

Its function is as follows. Required for the formation of sulfated nod factor. Proposed to transfer activated sulfate (PAPS) to a N-acetylglucosamine of the nod factor. The chain is Nodulation protein H (nodH) from Rhizobium tropici.